The primary structure comprises 237 residues: Sulfolipid-1 exporter Sap (237 aa).

Helical transmembrane passes span 5–25 (VLVLALSVICEPVRIGLVVLM), 38–58 (FLCGGYTMAGGVAMVTLVVLG), 66–86 (FSVAEVQIGTGLIALLIAFAL), 141–161 (VSGLGAALPSANYMGAMAAIL), 171–191 (ALAVVTFNVVAFTVAEVPLVS), and 217–237 (DAALLVAAGGCLMLTLGLSNL).

The protein belongs to the peptidoglycolipid addressing protein (GAP) (TC 2.A.116) family.

The protein resides in the cell inner membrane. Required for the transport across the inner membrane of sulfolipid-1 (SL-1), which is a major cell wall lipid of pathogenic mycobacteria. Could also transport SL1278 (2-palmitoyl-3-(C43)-phthioceranyl-alpha, alpha'-D-trehalose-2'-sulfate), which is the precursor of SL-1. May potentiate SL-1 levels and confer specificity for sulfolipids over structurally similar glycolipids. The polypeptide is Sulfolipid-1 exporter Sap (Mycobacterium tuberculosis (strain ATCC 25618 / H37Rv)).